Consider the following 460-residue polypeptide: Transcription factor AP-2-beta (460 aa).

Lysine 21 is covalently cross-linked (Glycyl lysine isopeptide (Lys-Gly) (interchain with G-Cter in SUMO)). A disordered region spans residues histidine 30–arginine 139. Residues serine 35–tyrosine 51 show a composition bias toward polar residues. A compositionally biased stretch (low complexity) spans leucine 121 to leucine 132. At serine 258 the chain carries Phosphoserine; by PKA. Residues asparagine 435–lysine 460 form a disordered region. The span at threonine 451 to lysine 460 shows a compositional bias: basic and acidic residues.

Belongs to the AP-2 family. Binds DNA as a dimer. Can form homodimers or heterodimers with other AP-2 family members. Interacts with CITED4. Interacts with UBE2I. Interacts with KCTD1; this interaction represses transcription activation. Interacts with CITED2 (via C-terminus); the interaction stimulates TFAP2B-transcriptional activity. Post-translationally, sumoylated on Lys-21; which inhibits transcriptional activity.

Its subcellular location is the nucleus. In terms of biological role, sequence-specific DNA-binding protein that interacts with inducible viral and cellular enhancer elements to regulate transcription of selected genes. AP-2 factors bind to the consensus sequence 5'-GCCNNNGGC-3' and activate genes involved in a large spectrum of important biological functions including proper eye, face, body wall, limb and neural tube development. They also suppress a number of genes including MCAM/MUC18, C/EBP alpha and MYC. AP-2-beta appears to be required for normal face and limb development and for proper terminal differentiation and function of renal tubular epithelia. The protein is Transcription factor AP-2-beta (TFAP2B) of Canis lupus familiaris (Dog).